The chain runs to 93 residues: Small ribosomal subunit protein uS19 (93 aa).

It belongs to the universal ribosomal protein uS19 family.

Functionally, protein S19 forms a complex with S13 that binds strongly to the 16S ribosomal RNA. The sequence is that of Small ribosomal subunit protein uS19 from Alkaliphilus oremlandii (strain OhILAs) (Clostridium oremlandii (strain OhILAs)).